The chain runs to 336 residues: Tetraacyldisaccharide 4'-kinase (336 aa).

60-67 (TVGGTGKT) lines the ATP pocket.

It belongs to the LpxK family.

The catalysed reaction is a lipid A disaccharide + ATP = a lipid IVA + ADP + H(+). It functions in the pathway glycolipid biosynthesis; lipid IV(A) biosynthesis; lipid IV(A) from (3R)-3-hydroxytetradecanoyl-[acyl-carrier-protein] and UDP-N-acetyl-alpha-D-glucosamine: step 6/6. In terms of biological role, transfers the gamma-phosphate of ATP to the 4'-position of a tetraacyldisaccharide 1-phosphate intermediate (termed DS-1-P) to form tetraacyldisaccharide 1,4'-bis-phosphate (lipid IVA). In Pseudomonas entomophila (strain L48), this protein is Tetraacyldisaccharide 4'-kinase.